The sequence spans 205 residues: uncharacterized protein (205 aa).

The next 3 membrane-spanning stretches (helical) occupy residues 45–65 (LFFY…FLVI), 119–139 (VFWL…VTAF), and 144–164 (FEWM…LWGY).

It belongs to the TVP23 family.

It is found in the membrane. This is an uncharacterized protein from Caenorhabditis elegans.